Reading from the N-terminus, the 145-residue chain is Flagellar assembly factor FliW (145 aa).

Belongs to the FliW family. In terms of assembly, interacts with translational regulator CsrA and flagellin(s).

The protein resides in the cytoplasm. Its function is as follows. Acts as an anti-CsrA protein, binds CsrA and prevents it from repressing translation of its target genes, one of which is flagellin. Binds to flagellin and participates in the assembly of the flagellum. This Clostridium tetani (strain Massachusetts / E88) protein is Flagellar assembly factor FliW.